The sequence spans 325 residues: N-acetyl-gamma-glutamyl-phosphate reductase (325 aa).

C135 is an active-site residue.

This sequence belongs to the NAGSA dehydrogenase family. Type 1 subfamily.

It localises to the cytoplasm. The enzyme catalyses N-acetyl-L-glutamate 5-semialdehyde + phosphate + NADP(+) = N-acetyl-L-glutamyl 5-phosphate + NADPH + H(+). The protein operates within amino-acid biosynthesis; L-arginine biosynthesis; N(2)-acetyl-L-ornithine from L-glutamate: step 3/4. In terms of biological role, catalyzes the NADPH-dependent reduction of N-acetyl-5-glutamyl phosphate to yield N-acetyl-L-glutamate 5-semialdehyde. In Karelsulcia muelleri (strain GWSS) (Sulcia muelleri), this protein is N-acetyl-gamma-glutamyl-phosphate reductase.